Reading from the N-terminus, the 270-residue chain is Formamidopyrimidine-DNA glycosylase (270 aa).

Pro2 serves as the catalytic Schiff-base intermediate with DNA. Glu3 serves as the catalytic Proton donor. Lys58 (proton donor; for beta-elimination activity) is an active-site residue. Residues His90, Arg109, and Arg152 each contribute to the DNA site. An FPG-type zinc finger spans residues 237–270 (RVYGREGEACECGGAIVRVVQSGRSTFYCRKCQR). Residue Arg260 is the Proton donor; for delta-elimination activity of the active site.

This sequence belongs to the FPG family. Monomer. Requires Zn(2+) as cofactor.

The enzyme catalyses Hydrolysis of DNA containing ring-opened 7-methylguanine residues, releasing 2,6-diamino-4-hydroxy-5-(N-methyl)formamidopyrimidine.. The catalysed reaction is 2'-deoxyribonucleotide-(2'-deoxyribose 5'-phosphate)-2'-deoxyribonucleotide-DNA = a 3'-end 2'-deoxyribonucleotide-(2,3-dehydro-2,3-deoxyribose 5'-phosphate)-DNA + a 5'-end 5'-phospho-2'-deoxyribonucleoside-DNA + H(+). Involved in base excision repair of DNA damaged by oxidation or by mutagenic agents. Acts as a DNA glycosylase that recognizes and removes damaged bases. Has a preference for oxidized purines, such as 7,8-dihydro-8-oxoguanine (8-oxoG). Has AP (apurinic/apyrimidinic) lyase activity and introduces nicks in the DNA strand. Cleaves the DNA backbone by beta-delta elimination to generate a single-strand break at the site of the removed base with both 3'- and 5'-phosphates. The polypeptide is Formamidopyrimidine-DNA glycosylase (Sphingopyxis alaskensis (strain DSM 13593 / LMG 18877 / RB2256) (Sphingomonas alaskensis)).